The chain runs to 432 residues: Adenylosuccinate synthetase (432 aa).

GTP-binding positions include 13–19 (GDEGKGK) and 41–43 (GHT). Asp14 serves as the catalytic Proton acceptor. Mg(2+) is bound by residues Asp14 and Gly41. IMP contacts are provided by residues 14-17 (DEGK), 39-42 (NAGH), Thr130, Arg144, Gln225, Thr240, and Arg304. The active-site Proton donor is His42. 300–306 (ATTGRKR) lines the substrate pocket. GTP contacts are provided by residues Arg306, 332–334 (KLD), and 414–416 (STG).

Belongs to the adenylosuccinate synthetase family. As to quaternary structure, homodimer. It depends on Mg(2+) as a cofactor.

It localises to the cytoplasm. The catalysed reaction is IMP + L-aspartate + GTP = N(6)-(1,2-dicarboxyethyl)-AMP + GDP + phosphate + 2 H(+). Its pathway is purine metabolism; AMP biosynthesis via de novo pathway; AMP from IMP: step 1/2. In terms of biological role, plays an important role in the de novo pathway of purine nucleotide biosynthesis. Catalyzes the first committed step in the biosynthesis of AMP from IMP. The sequence is that of Adenylosuccinate synthetase from Alkalilimnicola ehrlichii (strain ATCC BAA-1101 / DSM 17681 / MLHE-1).